We begin with the raw amino-acid sequence, 143 residues long: Large ribosomal subunit protein uL11 (143 aa).

Belongs to the universal ribosomal protein uL11 family. Part of the ribosomal stalk of the 50S ribosomal subunit. Interacts with L10 and the large rRNA to form the base of the stalk. L10 forms an elongated spine to which L12 dimers bind in a sequential fashion forming a multimeric L10(L12)X complex. One or more lysine residues are methylated.

In terms of biological role, forms part of the ribosomal stalk which helps the ribosome interact with GTP-bound translation factors. The polypeptide is Large ribosomal subunit protein uL11 (Chromobacterium violaceum (strain ATCC 12472 / DSM 30191 / JCM 1249 / CCUG 213 / NBRC 12614 / NCIMB 9131 / NCTC 9757 / MK)).